A 444-amino-acid polypeptide reads, in one-letter code: Mitogen-activated protein kinase mpk-1 (444 aa).

Polar residues-rich tracts occupy residues 1–17 (MPTW…TTRN) and 24–56 (GHPQ…HVRQ). Residues 1–56 (MPTWIPNNLCAQPTTRNAKPPSNGHPQATQQQSAPGSLAYRNSSNIPNGATNHVRQ) form a disordered region. The 289-residue stretch at 96–384 (YVNLSYIGEG…IEQALAHPYL (289 aa)) folds into the Protein kinase domain. Residues 102-110 (IGEGAYGMV) and lysine 125 contribute to the ATP site. Aspartate 220 serves as the catalytic Proton acceptor. Phosphothreonine is present on threonine 256. The TXY motif lies at 256-258 (TEY). A Phosphotyrosine modification is found at tyrosine 258.

This sequence belongs to the protein kinase superfamily. CMGC Ser/Thr protein kinase family. MAP kinase subfamily. As to quaternary structure, isoform a interacts with gck-1 (via N-terminus). Mg(2+) serves as cofactor. Isoform a is phosphorylated at the pachytene stage during oogenesis and is negatively regulated by gck-1. Isoform b is phosphorylated in proximal oocytes. Expressed in cells lining the rectum. Isoform a is expressed in nervous system, body wall muscles and posterior intestine. Isoform b expression may be restricted to germline.

The catalysed reaction is L-seryl-[protein] + ATP = O-phospho-L-seryl-[protein] + ADP + H(+). The enzyme catalyses L-threonyl-[protein] + ATP = O-phospho-L-threonyl-[protein] + ADP + H(+). Activated by dual phosphorylation at Thr-256 and Tyr-258. May be inactivated by lip-1-mediated dephosphorylation. Functionally, functions in let-60 Ras signaling pathway; acts downstream of lin-45 raf kinase, but before the lin-1 gene product in controlling vulval cell differentiation. Plays a negative role in proximal germline proliferation in the mitotic zone. Required for progression of developing oocytes through the pachytene stage, perhaps acting after efl-1/dpl-1-mediated gene activation and before gld-1 down-regulation. May play a role in global X chromosome reactivation or be indirectly required for progression of germ cells through meiosis to the point where X reactivation occurs. In oocytes, inhibits the activity of the chloride channel clh-3, likely by activating gck-3. Plays a role in response to M.nematophilum-mediated bacterial infection by promoting tail swelling and preventing constipation. Involved in fluid homeostasis. In addition, involved in the up-regulation of lysozyme ilys-3 expression in the intestine in responses to M.nematophilum-mediated bacterial infection. By phosphorylating transcription factor skn-1 (isoform c) may play a role in increasing life span downstream of lin-45, let-60 and mek-2. By up-regulating cep-1 and down-regulating gld-1 expression in the late pachytene stage, plays a role in germline apoptosis in response to DNA damage. Regulates egl-1 expression in response to DNA damage, probably upstream of cep-1. In terms of biological role, suppresses germline tumor formation by preventing the dedifferentiation of secondary spermatocytes probably upstream of rskn-1. This chain is Mitogen-activated protein kinase mpk-1 (mpk-1), found in Caenorhabditis elegans.